The chain runs to 383 residues: NAD(P) transhydrogenase subunit alpha part 1 (383 aa).

NAD(+) contacts are provided by residues 131-134, valine 181, 201-203, and glycine 231; these read QNMD and DVR.

The protein belongs to the AlaDH/PNT family. Heterotrimer of two alpha chains and a beta (PntB) chain; in Rickettsia, the alpha chain is made of two subunits (PntAA and PntAB) and forms a dimer.

The enzyme catalyses NAD(+) + NADPH + H(+)(in) = NADH + NADP(+) + H(+)(out). In terms of biological role, the transhydrogenation between NADH and NADP is coupled to respiration and ATP hydrolysis and functions as a proton pump across the membrane. This Rickettsia prowazekii (strain Madrid E) protein is NAD(P) transhydrogenase subunit alpha part 1 (pntAA).